A 165-amino-acid polypeptide reads, in one-letter code: uncharacterized protein (165 aa).

The segment covering 22-34 (QQANQENMSSRTD) has biased composition (polar residues). The disordered stretch occupies residues 22–45 (QQANQENMSSRTDSPIPPFGESEQ).

This is an uncharacterized protein from Homo sapiens (Human).